A 181-amino-acid chain; its full sequence is Proteinase inhibitor B (181 aa).

An N-terminal signal peptide occupies residues 1–24; sequence MAASNALLLISGALLISLAVLCQG. 3 disulfide bridges follow: Cys67-Cys113, Cys134-Cys143, and Cys136-Cys139.

The protein belongs to the protease inhibitor I3 (leguminous Kunitz-type inhibitor) family.

It localises to the secreted. In terms of biological role, possesses two reactive sites. Inhibits two molecules of trypsin simultaneously. Inhibits efficiently kallikrein, but chymotrypsin weakly. This chain is Proteinase inhibitor B, found in Sagittaria sagittifolia (Arrowhead).